We begin with the raw amino-acid sequence, 146 residues long: Large ribosomal subunit protein uL15 (146 aa).

The disordered stretch occupies residues 1–51 (MKLHELQPAPGSRKERNRVGRGIGSGNGKTSGKGHKGQNARSGGGVRIGFE). 2 stretches are compositionally biased toward gly residues: residues 21–31 (RGIGSGNGKTS) and 42–51 (SGGGVRIGFE).

This sequence belongs to the universal ribosomal protein uL15 family. Part of the 50S ribosomal subunit.

Functionally, binds to the 23S rRNA. This chain is Large ribosomal subunit protein uL15, found in Anoxybacillus flavithermus (strain DSM 21510 / WK1).